The sequence spans 70 residues: Large ribosomal subunit protein bL31c (70 aa).

This sequence belongs to the bacterial ribosomal protein bL31 family. Type A subfamily. In terms of assembly, part of the 50S ribosomal subunit.

The protein localises to the plastid. Its subcellular location is the chloroplast. Functionally, binds the 23S rRNA. The chain is Large ribosomal subunit protein bL31c from Porphyra purpurea (Red seaweed).